Consider the following 488-residue polypeptide: UDP-N-acetylmuramoyl-L-alanyl-D-glutamate--2,6-diaminopimelate ligase (488 aa).

Residues L24, S26, and 41–43 (HQV) each bind UDP-N-acetyl-alpha-D-muramoyl-L-alanyl-D-glutamate. 113-119 (GTNGKTT) provides a ligand contact to ATP. Residues N154, 155-156 (TT), S182, Q188, and R190 contribute to the UDP-N-acetyl-alpha-D-muramoyl-L-alanyl-D-glutamate site. At K222 the chain carries N6-carboxylysine. Meso-2,6-diaminopimelate is bound by residues R386, 410 to 413 (DNPR), G461, and E465. Residues 410–413 (DNPR) carry the Meso-diaminopimelate recognition motif motif.

This sequence belongs to the MurCDEF family. MurE subfamily. Requires Mg(2+) as cofactor. Post-translationally, carboxylation is probably crucial for Mg(2+) binding and, consequently, for the gamma-phosphate positioning of ATP.

The protein localises to the cytoplasm. It catalyses the reaction UDP-N-acetyl-alpha-D-muramoyl-L-alanyl-D-glutamate + meso-2,6-diaminopimelate + ATP = UDP-N-acetyl-alpha-D-muramoyl-L-alanyl-gamma-D-glutamyl-meso-2,6-diaminopimelate + ADP + phosphate + H(+). It participates in cell wall biogenesis; peptidoglycan biosynthesis. Functionally, catalyzes the addition of meso-diaminopimelic acid to the nucleotide precursor UDP-N-acetylmuramoyl-L-alanyl-D-glutamate (UMAG) in the biosynthesis of bacterial cell-wall peptidoglycan. This chain is UDP-N-acetylmuramoyl-L-alanyl-D-glutamate--2,6-diaminopimelate ligase, found in Haemophilus influenzae (strain PittEE).